The primary structure comprises 193 residues: CRIB domain-containing protein RIC5 (193 aa).

The 14-residue stretch at 29–42 (IGIPTDVKHVAHIG) folds into the CRIB domain. The segment at 42–193 (GWEGPSATTP…CAGLGSSTGR (152 aa)) is disordered. The segment covering 55–67 (HDFKPTDQTKTET) has biased composition (basic and acidic residues). Over residues 90 to 100 (STGNNSPTESP) the composition is skewed to polar residues. A compositionally biased stretch (low complexity) spans 123 to 134 (GSGSESGSGLEL).

As to quaternary structure, interacts with ARAC11/ROP1. Expressed in flowers and pollen.

It is found in the cell membrane. Its function is as follows. Functions as a downstream effector of Rho-related GTP binding proteins of the 'Rho of Plants' (ROPs) family. Participates in the propagation of ROP GTPase signals in specific cellular responses. Is involved in pollen tube growth regulation through its interaction with ARAC11/ROP1. This chain is CRIB domain-containing protein RIC5 (RIC5), found in Arabidopsis thaliana (Mouse-ear cress).